The chain runs to 121 residues: MAALGTWLSSVRRLHCSVVARAGGQWRLQQGLAANPSGYGPLTELPDWSFADGRPAPPMKGQLRRKAQREKLARRVVLLTQEMDAGIQAWKLRQQKLQEERKKEHDLKPKGTLLRSPLPNQ.

The N-terminal 22 residues, 1 to 22, are a transit peptide targeting the mitochondrion; that stretch reads MAALGTWLSSVRRLHCSVVARA. Positions 98 to 109 are enriched in basic and acidic residues; that stretch reads QEERKKEHDLKP. Residues 98-121 form a disordered region; sequence QEERKKEHDLKPKGTLLRSPLPNQ.

Belongs to the mitochondrion-specific ribosomal protein mL52 family. Component of the mitochondrial ribosome large subunit (39S) which comprises a 16S rRNA and about 50 distinct proteins.

Its subcellular location is the mitochondrion. The chain is Large ribosomal subunit protein mL52 (Mrpl52) from Mus musculus (Mouse).